The sequence spans 211 residues: Orotidine 5'-phosphate decarboxylase (211 aa).

Substrate-binding positions include Asp7, Lys29, 57 to 66 (DLKLADIPNT), Ser109, 162 to 172 (PGIGAQGGSPV), Gly185, and Arg186. Lys59 acts as the Proton donor in catalysis.

It belongs to the OMP decarboxylase family. Type 1 subfamily. Homodimer.

It carries out the reaction orotidine 5'-phosphate + H(+) = UMP + CO2. It functions in the pathway pyrimidine metabolism; UMP biosynthesis via de novo pathway; UMP from orotate: step 2/2. In terms of biological role, catalyzes the decarboxylation of orotidine 5'-monophosphate (OMP) to uridine 5'-monophosphate (UMP). The sequence is that of Orotidine 5'-phosphate decarboxylase from Pyrococcus furiosus (strain ATCC 43587 / DSM 3638 / JCM 8422 / Vc1).